Consider the following 1016-residue polypeptide: Coiled-coil domain-containing protein 57 (1016 aa).

The centrosomal targeting domain stretch occupies residues 1-503; it reads MLPLCSEREL…HGLLPGQEAQ (503 aa). Coiled coils occupy residues 14–607, 676–700, and 748–775; these read LARK…PVKT, SEVD…KHLK, and VTHL…LLEM. Disordered stretches follow at residues 500-519 and 549-573; these read QEAQ…DSPS and HLPP…DSTP. A microtubule binding domain region spans residues 604 to 1016; the sequence is PVKTSVATAD…SRIRNYNLKD (413 aa). Disordered regions lie at residues 781-921 and 933-1016; these read AEQG…LASS and GSSP…NLKD. 2 stretches are compositionally biased toward polar residues: residues 846-859 and 934-945; these read QPHS…TNTP and SSPSGVPSQDNS.

In terms of assembly, interacts with CEP63; the interaction is required for their location to proximal end of centrioles. Interacts with microtubules.

Its subcellular location is the cytoplasm. It is found in the cytoskeleton. The protein resides in the microtubule organizing center. It localises to the centrosome. The protein localises to the centriolar satellite. Its subcellular location is the centriole. It is found in the spindle. Functionally, pleiotropic regulator of centriole duplication, mitosis, and ciliogenesis. Critical interface between centrosome and microtubule-mediated cellular processes. Centriole duplication protein required for recruitment of CEP63, CEP152, and PLK4 to the centrosome. Independent of its centrosomal targeting, localizes to and interacts with microtubules and regulates microtubule nucleation, stability, and mitotic progression. The polypeptide is Coiled-coil domain-containing protein 57 (Mus musculus (Mouse)).